The primary structure comprises 119 residues: U9-hexatoxin-Hi1 (119 aa).

The N-terminal stretch at 1–17 (MKLYLVILVTSVALAAA) is a signal peptide. A propeptide spanning residues 18–53 (SPTRTKEEPIEDELLEALLSVEKSLFNEETTVMEKR) is cleaved from the precursor. 4 disulfide bridges follow: Cys55–Cys73, Cys66–Cys79, Cys70–Cys117, and Cys72–Cys88.

The protein belongs to the neurotoxin 03 (Tx2) family. 03 subfamily. In terms of tissue distribution, expressed by the venom gland.

It localises to the secreted. Its function is as follows. Probable ion channel inhibitor. The sequence is that of U9-hexatoxin-Hi1 from Hadronyche infensa (Fraser island funnel-web spider).